The sequence spans 333 residues: Probable endo-beta-1,4-glucanase B (333 aa).

An N-terminal signal peptide occupies residues 1 to 17 (MKFRNLFFAAVAGSAVA). 2 N-linked (GlcNAc...) asparagine glycosylation sites follow: N37 and N100. E160 functions as the Proton donor in the catalytic mechanism. E267 functions as the Nucleophile in the catalytic mechanism.

The protein belongs to the glycosyl hydrolase 5 (cellulase A) family.

The protein resides in the secreted. The enzyme catalyses Endohydrolysis of (1-&gt;4)-beta-D-glucosidic linkages in cellulose, lichenin and cereal beta-D-glucans.. In terms of biological role, has endoglucanase activity on substrates containing beta-1,4 glycosidic bonds, like in carboxymethylcellulose (CMC), hydroxyethylcellulose (HEC) and beta-glucan. Involved in the degradation of complex natural cellulosic substrates. This Aspergillus oryzae (strain ATCC 42149 / RIB 40) (Yellow koji mold) protein is Probable endo-beta-1,4-glucanase B (eglB).